A 344-amino-acid chain; its full sequence is Tetraacyldisaccharide 4'-kinase (344 aa).

65–72 (HAGGTGKT) contributes to the ATP binding site.

The protein belongs to the LpxK family.

It catalyses the reaction a lipid A disaccharide + ATP = a lipid IVA + ADP + H(+). It participates in glycolipid biosynthesis; lipid IV(A) biosynthesis; lipid IV(A) from (3R)-3-hydroxytetradecanoyl-[acyl-carrier-protein] and UDP-N-acetyl-alpha-D-glucosamine: step 6/6. Functionally, transfers the gamma-phosphate of ATP to the 4'-position of a tetraacyldisaccharide 1-phosphate intermediate (termed DS-1-P) to form tetraacyldisaccharide 1,4'-bis-phosphate (lipid IVA). The polypeptide is Tetraacyldisaccharide 4'-kinase (Neisseria meningitidis serogroup A / serotype 4A (strain DSM 15465 / Z2491)).